The chain runs to 321 residues: Methionine import ATP-binding protein MetN (321 aa).

The ABC transporter domain occupies 2–237; it reads ISIKNVNKYY…NTKGLRKLIG (236 aa). 34–41 serves as a coordination point for ATP; the sequence is GHSGAGKS.

Belongs to the ABC transporter superfamily. Methionine importer (TC 3.A.1.24) family. As to quaternary structure, the complex is composed of two ATP-binding proteins (MetN), two transmembrane proteins (MetI) and a solute-binding protein (MetQ).

It is found in the cell membrane. The catalysed reaction is L-methionine(out) + ATP + H2O = L-methionine(in) + ADP + phosphate + H(+). It carries out the reaction D-methionine(out) + ATP + H2O = D-methionine(in) + ADP + phosphate + H(+). Functionally, part of the ABC transporter complex MetNIQ involved in methionine import. Responsible for energy coupling to the transport system. This Clostridioides difficile (strain 630) (Peptoclostridium difficile) protein is Methionine import ATP-binding protein MetN.